The primary structure comprises 435 residues: Cyclin-J-like protein (435 aa).

Positions 14–191 (DVHCTLREKE…LLEAFSWNLC (178 aa)) constitute a Cyclin N-terminal domain. Residues 120 to 142 (SSNSPASAPHPPPTPPQVAETTG) form a disordered region.

The protein belongs to the cyclin family. Cyclin J subfamily.

The protein is Cyclin-J-like protein (CCNJL) of Homo sapiens (Human).